Reading from the N-terminus, the 289-residue chain is uncharacterized protein (289 aa).

Residues 80 to 96 are compositionally biased toward polar residues; sequence PLNESRTSFKNIPQSRN. Disordered stretches follow at residues 80 to 101 and 136 to 157; these read PLNE…PRDY and PREN…RMRE.

This is an uncharacterized protein from Acanthamoeba polyphaga (Amoeba).